Here is a 152-residue protein sequence, read N- to C-terminus: Calmodulin (152 aa).

A2 is subject to N-acetylalanine. 4 consecutive EF-hand domains span residues 10–45 (EQIA…LGQN), 46–81 (PTEA…KMQD), 83–118 (DTEE…LGEK), and 119–152 (LTNE…IVRN). Positions 23, 25, 27, 29, 34, 59, 61, 63, 65, 70, 96, 98, 100, 102, 107, 132, 134, 136, 138, and 143 each coordinate Ca(2+).

Belongs to the calmodulin family. As to quaternary structure, interacts with cmbB, numA/nucleomorphin, pgkA/phosphoglycerate kinase, and thyB/thymidine kinase in the presence of Ca(2+). Interacts with dwwA in the absence of Ca(2+). Post-translationally, the N-terminus is blocked. In terms of processing, trimethylation of Lys-118 observed in other calmodulins is absent here.

The protein localises to the contractile vacuole. Calmodulin mediates the control of a large number of enzymes, ion channels and other proteins by Ca(2+). Among the enzymes to be stimulated by the calmodulin-Ca(2+) complex are a number of protein kinases and phosphatases. This chain is Calmodulin (calA), found in Dictyostelium discoideum (Social amoeba).